The primary structure comprises 500 residues: MKNSNEISSSQSLKNNGSDGFFNTSLMYVLAACLASFLFGYQVSVLNTIKDFIVIEFGWCAGKEVNCDDSTLKSSFLLASVFIGAVVGSGFSGFLVQHGRRFSLLVIYNFFILVSILTSITHHFHTILFSRLLSGFGIGLITVSVPMYISEMTHKDKKGAYGVLHQLFITFGIFIAVLLGMAMGNVPEEVNNPLGTFQQIWWRLMFFFPCIISILGIVLLTFFFKEETPYYLFEKGKVEESKEILKKIYGSDDVDEPLKAIKDAVEQNEAAKKNSISLMRAMKIPSYRYVILLGCILSGLQQFTGINVLVSNSNALYKGFLTNEWITTLSVIMTVVNFLMTFPAIYIVEKLGRKTLLLCGCAGIVCAFLPTAIANLINNTSDVVKKLSISATFVMIVSFAVSYGPVLWIYLHEMFPSEIKDSAASLASLVNWMCAIIVVFPSDIIIKQSPTILFFIFSGMSIVAFLFIFFFIKETKGGEIGTSPYITLEERQKHMGKSVV.

Residues 1–25 are Cytoplasmic-facing; that stretch reads MKNSNEISSSQSLKNNGSDGFFNTS. A helical transmembrane segment spans residues 26–46; that stretch reads LMYVLAACLASFLFGYQVSVL. The Extracellular portion of the chain corresponds to 47-75; the sequence is NTIKDFIVIEFGWCAGKEVNCDDSTLKSS. The cysteines at positions 60 and 67 are disulfide-linked. The helical transmembrane segment at 76–96 threads the bilayer; the sequence is FLLASVFIGAVVGSGFSGFLV. At 97–101 the chain is on the cytoplasmic side; that stretch reads QHGRR. A helical transmembrane segment spans residues 102 to 122; that stretch reads FSLLVIYNFFILVSILTSITH. The Extracellular portion of the chain corresponds to 123 to 131; it reads HFHTILFSR. The helical transmembrane segment at 132 to 152 threads the bilayer; it reads LLSGFGIGLITVSVPMYISEM. Residues 153-166 are Cytoplasmic-facing; the sequence is THKDKKGAYGVLHQ. Residue Q166 participates in alpha-D-glucose binding. Q166 contributes to the beta-D-glucose binding site. Residues 167–187 traverse the membrane as a helical segment; the sequence is LFITFGIFIAVLLGMAMGNVP. The Extracellular portion of the chain corresponds to 188–203; sequence EEVNNPLGTFQQIWWR. Residues 204–224 traverse the membrane as a helical segment; the sequence is LMFFFPCIISILGIVLLTFFF. Residues 225–289 lie on the Cytoplasmic side of the membrane; the sequence is KEETPYYLFE…RAMKIPSYRY (65 aa). A helical membrane pass occupies residues 290-310; sequence VILLGCILSGLQQFTGINVLV. Residues Q301, Q302, and N307 each coordinate alpha-D-glucose. Q301 is a beta-D-glucose binding site. Residue N307 participates in beta-D-glucose binding. Residues 311–327 lie on the Extracellular side of the membrane; the sequence is SNSNALYKGFLTNEWIT. Residues 328–348 traverse the membrane as a helical segment; it reads TLSVIMTVVNFLMTFPAIYIV. N337 is a beta-D-glucose binding site. Topologically, residues 349 to 356 are cytoplasmic; it reads EKLGRKTL. The helical transmembrane segment at 357 to 377 threads the bilayer; sequence LLCGCAGIVCAFLPTAIANLI. Topologically, residues 378–390 are extracellular; sequence NNTSDVVKKLSIS. The chain crosses the membrane as a helical span at residues 391–411; it reads ATFVMIVSFAVSYGPVLWIYL. Alpha-D-glucose is bound at residue W408. At 412-425 the chain is on the cytoplasmic side; sequence HEMFPSEIKDSAAS. Residues 426 to 446 traverse the membrane as a helical segment; it reads LASLVNWMCAIIVVFPSDIII. Topologically, residues 447 to 451 are extracellular; sequence KQSPT. The chain crosses the membrane as a helical span at residues 452 to 472; it reads ILFFIFSGMSIVAFLFIFFFI. The Cytoplasmic segment spans residues 473–500; that stretch reads KETKGGEIGTSPYITLEERQKHMGKSVV.

The protein belongs to the major facilitator superfamily. Sugar transporter (TC 2.A.1.1) family. Homodimer.

The protein localises to the cell membrane. The enzyme catalyses D-glucose(out) = D-glucose(in). The catalysed reaction is D-fructose(out) = D-fructose(in). It catalyses the reaction D-galactose(in) = D-galactose(out). It carries out the reaction D-mannose(out) = D-mannose(in). The enzyme catalyses D-glucosamine(out) = D-glucosamine(in). The catalysed reaction is D-xylose(out) = D-xylose(in). With respect to regulation, inhibited by cytochalasin B. Its function is as follows. Sodium-independent facilitative hexose transporter. Can transport D-glucose and D-fructose. Can transport D-mannose, D-galactose, D-xylose and D-glucosamine. This is Hexose transporter 1 from Plasmodium knowlesi.